A 220-amino-acid chain; its full sequence is Probable septum site-determining protein MinC (220 aa).

Belongs to the MinC family. As to quaternary structure, interacts with MinD and FtsZ.

In terms of biological role, cell division inhibitor that blocks the formation of polar Z ring septums. Rapidly oscillates between the poles of the cell to destabilize FtsZ filaments that have formed before they mature into polar Z rings. Prevents FtsZ polymerization. The protein is Probable septum site-determining protein MinC of Photobacterium profundum (strain SS9).